A 346-amino-acid polypeptide reads, in one-letter code: L-malyl-CoA/beta-methylmalyl-CoA lyase (346 aa).

Mg(2+)-binding residues include Glu-148 and Asp-177. Substrate contacts are provided by residues 176–177 (VD) and 253–254 (LH).

It belongs to the HpcH/HpaI aldolase family. Mg(2+) serves as cofactor. Mn(2+) is required as a cofactor.

It carries out the reaction (S)-malyl-CoA = glyoxylate + acetyl-CoA. It catalyses the reaction (2R,3S)-beta-methylmalyl-CoA = propanoyl-CoA + glyoxylate. Functionally, involved in the methylaspartate cycle. Catalyzes the reversible cleavage of beta-methylmalyl-CoA to propionyl-CoA and glyoxylate, as well as the reversible cleavage of (S)-malyl-CoA to acetyl-CoA and glyoxylate. In addition, it has a small malyl-CoA thioesterase activity. It can also catalyze the cleavage of (S)-citramalyl-CoA to acetyl-CoA and pyruvate. The chain is L-malyl-CoA/beta-methylmalyl-CoA lyase (citE1) from Haloarcula marismortui (strain ATCC 43049 / DSM 3752 / JCM 8966 / VKM B-1809) (Halobacterium marismortui).